A 566-amino-acid polypeptide reads, in one-letter code: Urease subunit alpha 2 (566 aa).

The region spanning 128–566 is the Urease domain; the sequence is GGVDTHIHFI…LPMAQRYFLF (439 aa). Ni(2+) is bound by residues His133, His135, and Lys216. Lys216 carries the N6-carboxylysine modification. Residue His218 coordinates substrate. Ni(2+) contacts are provided by His245 and His271. The Proton donor role is filled by His319. Position 359 (Asp359) interacts with Ni(2+).

The protein belongs to the metallo-dependent hydrolases superfamily. Urease alpha subunit family. As to quaternary structure, may form a heterohexamer of 3 UreC (alpha) and 3 UreAB (gamma/beta) subunits. May also form a heterotrimer of UreA (gamma), UreB (beta) and UreC (alpha) subunits. Three heterotrimers associate to form the active enzyme. It depends on Ni cation as a cofactor. In terms of processing, carboxylation allows a single lysine to coordinate two nickel ions.

The protein localises to the cytoplasm. It carries out the reaction urea + 2 H2O + H(+) = hydrogencarbonate + 2 NH4(+). The protein operates within nitrogen metabolism; urea degradation; CO(2) and NH(3) from urea (urease route): step 1/1. The protein is Urease subunit alpha 2 of Pseudomonas syringae pv. syringae (strain B728a).